The sequence spans 734 residues: Photosystem I P700 chlorophyll a apoprotein A2 (734 aa).

The next 8 membrane-spanning stretches (helical) occupy residues 46-69 (IFASHFGQLAIIFLWTSGNLFHVA), 135-158 (LYTGALFLLVGAAILLFAGWLHLQ), 175-199 (LNHHLAGLFGVSSLAWTGHLVHVAI), 273-291 (MAHHHLAIAVVFILAGHMY), 330-353 (LHFQLGLALASLGVITSLVAQHMY), 369-395 (SALYTHHQYIAGFIMTGAFAHGAIFFI), 417-439 (ALISHLSWVTLFLGFHTLGLYVH), and 517-535 (FLVHHAIALGLHTTTLILV). Cys-559 and Cys-568 together coordinate [4Fe-4S] cluster. 2 consecutive transmembrane segments (helical) span residues 575-596 (AFYLAVFWMLNTIGWTTFYWHW) and 643-665 (LSVWAWMFLFGHLVWATGFMFLI). Residues His-654, Met-662, and Tyr-670 each coordinate chlorophyll a. Phylloquinone is bound at residue Trp-671. The helical transmembrane segment at 707-727 (LVGLAHFSVGYVFTYAAFVIA) threads the bilayer.

Belongs to the PsaA/PsaB family. In terms of assembly, the PsaA/B heterodimer binds the P700 chlorophyll special pair and subsequent electron acceptors. PSI consists of a core antenna complex that captures photons, and an electron transfer chain that converts photonic excitation into a charge separation. The eukaryotic PSI reaction center is composed of at least 11 subunits. P700 is a chlorophyll a/chlorophyll a' dimer, A0 is one or more chlorophyll a, A1 is one or both phylloquinones and FX is a shared 4Fe-4S iron-sulfur center. serves as cofactor.

Its subcellular location is the plastid. It is found in the chloroplast thylakoid membrane. The catalysed reaction is reduced [plastocyanin] + hnu + oxidized [2Fe-2S]-[ferredoxin] = oxidized [plastocyanin] + reduced [2Fe-2S]-[ferredoxin]. Its function is as follows. PsaA and PsaB bind P700, the primary electron donor of photosystem I (PSI), as well as the electron acceptors A0, A1 and FX. PSI is a plastocyanin/cytochrome c6-ferredoxin oxidoreductase, converting photonic excitation into a charge separation, which transfers an electron from the donor P700 chlorophyll pair to the spectroscopically characterized acceptors A0, A1, FX, FA and FB in turn. Oxidized P700 is reduced on the lumenal side of the thylakoid membrane by plastocyanin or cytochrome c6. This chain is Photosystem I P700 chlorophyll a apoprotein A2, found in Nephroselmis olivacea (Green alga).